Reading from the N-terminus, the 333-residue chain is 5-formaminoimidazole-4-carboxamide-1-(beta)-D-ribofuranosyl 5'-monophosphate synthetase (333 aa).

The 5-amino-1-(5-phospho-beta-D-ribosyl)imidazole-4-carboxamide site is built by His21 and Ser84. In terms of domain architecture, ATP-grasp spans 118–313 (MELLAAAGIP…YFDEPMDMGE (196 aa)). Residues 141–187 (PVIV…VPAY) and Glu209 contribute to the ATP site. Residue Asn229 coordinates 5-amino-1-(5-phospho-beta-D-ribosyl)imidazole-4-carboxamide. Glu268 and Glu281 together coordinate Mg(2+).

It belongs to the phosphohexose mutase family. Requires Mg(2+) as cofactor. Mn(2+) serves as cofactor.

It catalyses the reaction 5-amino-1-(5-phospho-beta-D-ribosyl)imidazole-4-carboxamide + formate + ATP = 5-formamido-1-(5-phospho-D-ribosyl)imidazole-4-carboxamide + ADP + phosphate. The protein operates within purine metabolism; IMP biosynthesis via de novo pathway; 5-formamido-1-(5-phospho-D-ribosyl)imidazole-4-carboxamide from 5-amino-1-(5-phospho-D-ribosyl)imidazole-4-carboxamide (formate route): step 1/1. Functionally, catalyzes the ATP- and formate-dependent formylation of 5-aminoimidazole-4-carboxamide-1-beta-d-ribofuranosyl 5'-monophosphate (AICAR) to 5-formaminoimidazole-4-carboxamide-1-beta-d-ribofuranosyl 5'-monophosphate (FAICAR) in the absence of folates. This Pyrobaculum calidifontis (strain DSM 21063 / JCM 11548 / VA1) protein is 5-formaminoimidazole-4-carboxamide-1-(beta)-D-ribofuranosyl 5'-monophosphate synthetase.